A 577-amino-acid chain; its full sequence is Mitochondrial-processing peptidase subunit alpha (577 aa).

The N-terminal 35 residues, 1-35 (MLNRFRPARLVAQSSRCLPLTRARAGPLPVNNART), are a transit peptide targeting the mitochondrion. Residues 259–301 (SDAPGLSRTGSETSVDSLVSESSEASSESSSSSSDSSESSGGL) form a disordered region. The span at 269-301 (SETSVDSLVSESSEASSESSSSSSDSSESSGGL) shows a compositional bias: low complexity.

Belongs to the peptidase M16 family. As to quaternary structure, heterodimer of mpp (alpha) and pep (beta) subunits, forming the mitochondrial processing protease (MPP) in which mpp is involved in substrate recognition and binding and pep is the catalytic subunit.

It is found in the mitochondrion matrix. Its function is as follows. Substrate recognition and binding subunit of the essential mitochondrial processing protease (MPP), which cleaves the mitochondrial sequence off newly imported precursors proteins. The protein is Mitochondrial-processing peptidase subunit alpha of Neurospora crassa (strain ATCC 24698 / 74-OR23-1A / CBS 708.71 / DSM 1257 / FGSC 987).